Reading from the N-terminus, the 110-residue chain is DNA-directed RNA polymerase subunit omega (110 aa).

It belongs to the RNA polymerase subunit omega family. As to quaternary structure, the RNAP catalytic core consists of 2 alpha, 1 beta, 1 beta' and 1 omega subunit. When a sigma factor is associated with the core the holoenzyme is formed, which can initiate transcription.

The catalysed reaction is RNA(n) + a ribonucleoside 5'-triphosphate = RNA(n+1) + diphosphate. Promotes RNA polymerase assembly. Latches the N- and C-terminal regions of the beta' subunit thereby facilitating its interaction with the beta and alpha subunits. The protein is DNA-directed RNA polymerase subunit omega of Nocardioides sp. (strain ATCC BAA-499 / JS614).